The primary structure comprises 100 residues: Small ribosomal subunit protein uS14c (100 aa).

It belongs to the universal ribosomal protein uS14 family. As to quaternary structure, part of the 30S ribosomal subunit.

Its subcellular location is the plastid. It is found in the chloroplast. Binds 16S rRNA, required for the assembly of 30S particles. The sequence is that of Small ribosomal subunit protein uS14c from Lepidium virginicum (Virginia pepperweed).